The chain runs to 911 residues: Translation initiation factor IF-2 (911 aa).

Composition is skewed to basic and acidic residues over residues 80–94 and 101–113; these read LEEQ…EQQL and RPER…RTEV. 3 disordered regions span residues 80-142, 153-172, and 195-309; these read LEEQ…VSEP, VKSP…DVEG, and SSLG…KMRK. The span at 214-256 shows a compositional bias: basic and acidic residues; the sequence is KEQADELKDEFDIKAKEGGKEREAGGESRKPVKKGSEETKKTT. Residues 262–272 are compositionally biased toward basic residues; it reads AKKKKGKKKKK. The segment covering 273–284 has biased composition (basic and acidic residues); sequence PEVDEKTIEKNI. Positions 286–300 are enriched in low complexity; sequence STISGMDDTSGSGSS. The tr-type G domain maps to 408–578; sequence IRPPVVTIMG…LTEAEIRELK (171 aa). A G1 region spans residues 417–424; it reads GHVDHGKT. 417–424 serves as a coordination point for GTP; the sequence is GHVDHGKT. Residues 442–446 form a G2 region; it reads GITQH. The G3 stretch occupies residues 464-467; that stretch reads DTPG. GTP-binding positions include 464 to 468 and 518 to 521; these read DTPGH and NKID. Residues 518–521 are G4; that stretch reads NKID. The interval 554–556 is G5; the sequence is SAK.

The protein belongs to the TRAFAC class translation factor GTPase superfamily. Classic translation factor GTPase family. IF-2 subfamily.

The protein resides in the cytoplasm. Functionally, one of the essential components for the initiation of protein synthesis. Protects formylmethionyl-tRNA from spontaneous hydrolysis and promotes its binding to the 30S ribosomal subunits. Also involved in the hydrolysis of GTP during the formation of the 70S ribosomal complex. The chain is Translation initiation factor IF-2 from Chlorobium phaeobacteroides (strain BS1).